Consider the following 216-residue polypeptide: Large ribosomal subunit protein bL21 (216 aa).

It belongs to the bacterial ribosomal protein bL21 family. As to quaternary structure, part of the 50S ribosomal subunit. Contacts protein L20.

Functionally, this protein binds to 23S rRNA in the presence of protein L20. In Roseobacter denitrificans (strain ATCC 33942 / OCh 114) (Erythrobacter sp. (strain OCh 114)), this protein is Large ribosomal subunit protein bL21.